The sequence spans 540 residues: Cytochrome P450 monooxygenase ORF5 (540 aa).

The helical transmembrane segment at 48 to 68 (YHALGTAIALFACACAYALVA) threads the bilayer. N-linked (GlcNAc...) asparagine glycosylation is found at Asn376 and Asn460. Cys483 lines the heme pocket.

It belongs to the cytochrome P450 family. Requires heme as cofactor.

It is found in the membrane. Its pathway is sesquiterpene biosynthesis. In terms of biological role, cytochrome P450 monooxygenase; part of the gene cluster that mediates the biosynthesis of PR-toxin, a bicyclic sesquiterpene belonging to the eremophilane class and acting as a mycotoxin. The first step of the pathway is catalyzed by the aristolochene synthase which performs the cyclization of trans,trans-farnesyl diphosphate (FPP) to the bicyclic sesquiterpene aristolochene. Following the formation of aristolochene, the non-oxygenated aristolochene is converted to the trioxygenated intermediate eremofortin B, via 7-epi-neopetasone. This conversion appears to involve three enzymes, a hydroxysterol oxidase-like enzyme, the quinone-oxidase prx3 that forms the quinone-type-structure in the bicyclic nucleus of aristolochene with the C8-oxo group and the C-3 hydroxyl group, and the P450 monooxygenase ORF6 that introduces the epoxide at the double bond between carbons 1 and 2. No monoxy or dioxy-intermediates have been reported to be released to the broth, so these three early oxidative reactions may be coupled together. Eremofortin B is further oxidized by another P450 monooxygenase, that introduces a second epoxide between carbons 7 and 11 prior to acetylation to eremofortin A by the acetyltransferase ORF8. The second epoxidation may be performed by a second P450 monooxygenase. After the acetylation step, eremofortin A is converted to eremofortin C and then to PR-toxin. First the conversion of eremofortin A to eremofortin C proceeds by oxidation of the side chain of the molecule at C-12 and is catalyzed by the short-chain oxidoreductase prx1. The cytochrome P450 monooxygenase ORF6 is probably also involved in this step. The primary alcohol formed at C-12 is finally oxidized by the short-chain alcohol dehydrogenase prx4 that forms PR-toxin. This Penicillium roqueforti (strain FM164) protein is Cytochrome P450 monooxygenase ORF5.